We begin with the raw amino-acid sequence, 213 residues long: Phosphatidylserine decarboxylase proenzyme (213 aa).

Residue serine 180 is the Schiff-base intermediate with substrate; via pyruvic acid of the active site. At serine 180 the chain carries Pyruvic acid (Ser); by autocatalysis.

Belongs to the phosphatidylserine decarboxylase family. PSD-A subfamily. In terms of assembly, heterodimer of a large membrane-associated beta subunit and a small pyruvoyl-containing alpha subunit. It depends on pyruvate as a cofactor. In terms of processing, is synthesized initially as an inactive proenzyme. Formation of the active enzyme involves a self-maturation process in which the active site pyruvoyl group is generated from an internal serine residue via an autocatalytic post-translational modification. Two non-identical subunits are generated from the proenzyme in this reaction, and the pyruvate is formed at the N-terminus of the alpha chain, which is derived from the carboxyl end of the proenzyme. The post-translation cleavage follows an unusual pathway, termed non-hydrolytic serinolysis, in which the side chain hydroxyl group of the serine supplies its oxygen atom to form the C-terminus of the beta chain, while the remainder of the serine residue undergoes an oxidative deamination to produce ammonia and the pyruvoyl prosthetic group on the alpha chain.

Its subcellular location is the cell membrane. The catalysed reaction is a 1,2-diacyl-sn-glycero-3-phospho-L-serine + H(+) = a 1,2-diacyl-sn-glycero-3-phosphoethanolamine + CO2. It functions in the pathway phospholipid metabolism; phosphatidylethanolamine biosynthesis; phosphatidylethanolamine from CDP-diacylglycerol: step 2/2. Catalyzes the formation of phosphatidylethanolamine (PtdEtn) from phosphatidylserine (PtdSer). This Carboxydothermus hydrogenoformans (strain ATCC BAA-161 / DSM 6008 / Z-2901) protein is Phosphatidylserine decarboxylase proenzyme.